We begin with the raw amino-acid sequence, 379 residues long: Queuine tRNA-ribosyltransferase (379 aa).

The active-site Proton acceptor is the aspartate 94. Substrate-binding positions include 94–98, aspartate 148, glutamine 191, and glycine 218; that span reads DSGGF. An RNA binding region spans residues 249–255; the sequence is GVGSPDS. Aspartate 268 serves as the catalytic Nucleophile. Residues 273-277 form an RNA binding; important for wobble base 34 recognition region; that stretch reads TRIAR. Zn(2+)-binding residues include cysteine 306, cysteine 308, cysteine 311, and histidine 337.

This sequence belongs to the queuine tRNA-ribosyltransferase family. In terms of assembly, homodimer. Within each dimer, one monomer is responsible for RNA recognition and catalysis, while the other monomer binds to the replacement base PreQ1. It depends on Zn(2+) as a cofactor.

The enzyme catalyses 7-aminomethyl-7-carbaguanine + guanosine(34) in tRNA = 7-aminomethyl-7-carbaguanosine(34) in tRNA + guanine. The protein operates within tRNA modification; tRNA-queuosine biosynthesis. Its function is as follows. Catalyzes the base-exchange of a guanine (G) residue with the queuine precursor 7-aminomethyl-7-deazaguanine (PreQ1) at position 34 (anticodon wobble position) in tRNAs with GU(N) anticodons (tRNA-Asp, -Asn, -His and -Tyr). Catalysis occurs through a double-displacement mechanism. The nucleophile active site attacks the C1' of nucleotide 34 to detach the guanine base from the RNA, forming a covalent enzyme-RNA intermediate. The proton acceptor active site deprotonates the incoming PreQ1, allowing a nucleophilic attack on the C1' of the ribose to form the product. After dissociation, two additional enzymatic reactions on the tRNA convert PreQ1 to queuine (Q), resulting in the hypermodified nucleoside queuosine (7-(((4,5-cis-dihydroxy-2-cyclopenten-1-yl)amino)methyl)-7-deazaguanosine). The chain is Queuine tRNA-ribosyltransferase from Bacillus cytotoxicus (strain DSM 22905 / CIP 110041 / 391-98 / NVH 391-98).